The primary structure comprises 643 residues: Threonine--tRNA ligase (643 aa).

Positions 1–61 (MIKITLKDGS…NEDSSLEICT (61 aa)) constitute a TGS domain. The interval 240-540 (DHNKLGRELG…LIEKYAGALP (301 aa)) is catalytic. Cys335, His386, and His517 together coordinate Zn(2+).

It belongs to the class-II aminoacyl-tRNA synthetase family. As to quaternary structure, homodimer. Requires Zn(2+) as cofactor.

The protein resides in the cytoplasm. It carries out the reaction tRNA(Thr) + L-threonine + ATP = L-threonyl-tRNA(Thr) + AMP + diphosphate + H(+). In terms of biological role, catalyzes the attachment of threonine to tRNA(Thr) in a two-step reaction: L-threonine is first activated by ATP to form Thr-AMP and then transferred to the acceptor end of tRNA(Thr). Also edits incorrectly charged L-seryl-tRNA(Thr). This Clostridium perfringens (strain SM101 / Type A) protein is Threonine--tRNA ligase.